A 1763-amino-acid chain; its full sequence is Genome polyprotein (1763 aa).

The SF3 helicase domain occupies aspartate 458–threonine 614. Residue glycine 484–threonine 491 participates in ATP binding. Tyrosine 984 bears the O-(5'-phospho-RNA)-tyrosine mark. Residues glycine 1073–aspartate 1229 enclose the Peptidase C24 domain. Residues histidine 1110, glutamate 1131, and cysteine 1193 each act as for 3CLpro activity in the active site. The 126-residue stretch at alanine 1478 to serine 1603 folds into the RdRp catalytic domain.

As to quaternary structure, protein p32: Homodimer. Interacts with NTPase, protein p30 and protease-polymerase p76. Interacts with capsid protein VP1 and protease-polymerase p76. In terms of assembly, homooligomer. Interacts with Vpg, protein p32 and may interact with capsid protein VP1. Post-translationally, specific enzymatic cleavages in vivo yield mature proteins. Pro-Pol is first autocatalytically cleaved, then processes the whole polyprotein. VPg is uridylylated by the polymerase and is covalently attached to the 5'-end of the polyadenylated genomic and subgenomic RNAs. This uridylylated form acts as a nucleotide-peptide primer for the polymerase.

It carries out the reaction a ribonucleoside 5'-triphosphate + H2O = a ribonucleoside 5'-diphosphate + phosphate + H(+). The catalysed reaction is RNA(n) + a ribonucleoside 5'-triphosphate = RNA(n+1) + diphosphate. It catalyses the reaction Endopeptidase with a preference for cleavage when the P1 position is occupied by Glu-|-Xaa and the P1' position is occupied by Gly-|-Yaa.. Functionally, NTPase presumably plays a role in replication. Despite having similarities with helicases, does not seem to display any helicase activity. Its function is as follows. Viral genome-linked protein is covalently linked to the 5'-end of the positive-strand, negative-strand genomic RNAs and subgenomic RNA. Acts as a genome-linked replication primer. May recruit ribosome to viral RNA thereby promoting viral proteins translation. The protease activity processes the polyprotein: Pro-Pol is first released by autocleavage, then all other proteins are cleaved. Cleaves host translation initiation factor eIF4G1, eIF4G2 and PABP1 thereby inducing a shutdown of host protein synthesis. This shutdown may not prevent viral mRNA from being translated since viral Vpg replaces the cap. May cleave host polyadenylate-binding protein thereby inhibiting cellular translation. Seems to act as a RNase and degrades host Pol II-driven mRNAs with the help of host XRN1. Inhibits the integrated stress response (ISR) in the infected cell by cleaving host G3BP1 and G3BP2. Stress granule formation is thus inhibited, which allows protein synthesis and viral replication. The RNA-directed RNA polymerase activity replicates genomic and antigenomic viral RNA by recognizing specific signals. Also transcribes a subgenomic mRNA by initiating RNA synthesis internally on antigenomic RNA. This sgRNA codes for structural proteins. Catalyzes the covalent attachment VPg with viral RNAs. In terms of biological role, selectively decays the mRNA of host interferon receptor IFNAR1. The polypeptide is Genome polyprotein (Feline calicivirus (FCV)).